The chain runs to 42 residues: Delta-hexatoxin-Hv1b (42 aa).

4 disulfide bridges follow: cysteine 1-cysteine 15, cysteine 8-cysteine 20, cysteine 14-cysteine 31, and cysteine 16-cysteine 42.

It belongs to the neurotoxin 06 (delta-actx) family. In terms of tissue distribution, expressed by the venom gland.

It is found in the secreted. Its function is as follows. Lethal neurotoxin. Slows the inactivation of tetrodotoxin-sensitive voltage-gated sodium channels (Nav) by binding to site 3 of the channel, resulting in repetitive firing in autonomic and motor nerve fibers. This chain is Delta-hexatoxin-Hv1b, found in Hadronyche versuta (Blue mountains funnel-web spider).